Here is a 529-residue protein sequence, read N- to C-terminus: PTS system alpha-glucoside-specific EIICB component (529 aa).

The 416-residue stretch at 1 to 416 (MMKKVQRFGG…MDLKTPGRED (416 aa)) folds into the PTS EIIC type-1 domain. 12 consecutive transmembrane segments (helical) span residues 8 to 28 (FGGA…VVGL), 59 to 79 (GWTV…ISLA), 91 to 111 (FALY…FYGI), 130 to 150 (VPTL…VVYL), 170 to 190 (VFVY…TVLI), 198 to 218 (ISAL…IYTF), 222 to 242 (ILIP…GPAA), 272 to 292 (GGFA…ALAM), 304 to 324 (VAAL…TEPL), 328 to 348 (FLFI…TMAA), 352 to 372 (AFGV…LNWI), and 380 to 400 (GTVI…FVVF). The region spanning 450-529 (AQKGAIILEA…ERIEEMMKKG (80 aa)) is the PTS EIIB type-1 domain. Catalysis depends on Cys472, which acts as the Phosphocysteine intermediate; for EIIB activity.

It is found in the cell membrane. In terms of biological role, the phosphoenolpyruvate-dependent sugar phosphotransferase system (sugar PTS), a major carbohydrate active -transport system, catalyzes the phosphorylation of incoming sugar substrates concomitantly with their translocation across the cell membrane. This system is probably involved in transport of the alpha-glucosides trehalulose, turanose, maltulose and palatinose. The polypeptide is PTS system alpha-glucoside-specific EIICB component (Leptotrichia buccalis (strain ATCC 14201 / DSM 1135 / JCM 12969 / NCTC 10249 / C-1013-b)).